The chain runs to 244 residues: Nonsense-mediated decay protein 4 (244 aa).

The protein resides in the cytoplasm. Its function is as follows. Involved in nonsense-mediated decay of mRNAs containing premature stop codons. In Kluyveromyces lactis (strain ATCC 8585 / CBS 2359 / DSM 70799 / NBRC 1267 / NRRL Y-1140 / WM37) (Yeast), this protein is Nonsense-mediated decay protein 4 (NMD4).